Consider the following 127-residue polypeptide: Aspartate 1-decarboxylase (127 aa).

S25 serves as the catalytic Schiff-base intermediate with substrate; via pyruvic acid. S25 bears the Pyruvic acid (Ser) mark. Residue T57 coordinates substrate. Y58 acts as the Proton donor in catalysis. 73–75 is a binding site for substrate; it reads GAA.

The protein belongs to the PanD family. Heterooctamer of four alpha and four beta subunits. It depends on pyruvate as a cofactor. In terms of processing, is synthesized initially as an inactive proenzyme, which is activated by self-cleavage at a specific serine bond to produce a beta-subunit with a hydroxyl group at its C-terminus and an alpha-subunit with a pyruvoyl group at its N-terminus.

The protein resides in the cytoplasm. The enzyme catalyses L-aspartate + H(+) = beta-alanine + CO2. It functions in the pathway cofactor biosynthesis; (R)-pantothenate biosynthesis; beta-alanine from L-aspartate: step 1/1. Catalyzes the pyruvoyl-dependent decarboxylation of aspartate to produce beta-alanine. This chain is Aspartate 1-decarboxylase, found in Bacillus licheniformis (strain ATCC 14580 / DSM 13 / JCM 2505 / CCUG 7422 / NBRC 12200 / NCIMB 9375 / NCTC 10341 / NRRL NRS-1264 / Gibson 46).